The primary structure comprises 214 residues: Adenylate kinase (214 aa).

Residue 10-15 (GAGKGT) coordinates ATP. Positions 30-59 (STGDMLRAAVKAGSELGLKAKEIMDAGKLV) are NMP. Residues Thr-31, Arg-36, 57–59 (KLV), 85–88 (GFPR), and Gln-92 each bind AMP. Positions 122–159 (GRRVHAASGRVYHVKFNPPKVEDKDDVTGEDLTIRKDD) are LID. Residues Arg-123 and 132–133 (VY) each bind ATP. Positions 156 and 167 each coordinate AMP. Arg-200 serves as a coordination point for ATP.

It belongs to the adenylate kinase family. Monomer.

It localises to the cytoplasm. The enzyme catalyses AMP + ATP = 2 ADP. It participates in purine metabolism; AMP biosynthesis via salvage pathway; AMP from ADP: step 1/1. In terms of biological role, catalyzes the reversible transfer of the terminal phosphate group between ATP and AMP. Plays an important role in cellular energy homeostasis and in adenine nucleotide metabolism. This is Adenylate kinase from Yersinia enterocolitica serotype O:8 / biotype 1B (strain NCTC 13174 / 8081).